We begin with the raw amino-acid sequence, 805 residues long: Polyribonucleotide nucleotidyltransferase (805 aa).

D491 and D497 together coordinate Mg(2+). The KH domain maps to 558-617 (PRMESMIIDKNKIKNVIGTGGKNVREICEKTGVKIEISQDGTVMIYAVSRDAVEEAKNMI). In terms of domain architecture, S1 motif spans 627-694 (GKVFSGVISE…DKDHVQLSMR (68 aa)). The segment at 702 to 805 (DLLEHESYSS…GGGNKKPRFF (104 aa)) is disordered. Residues 709–721 (YSSSKKNGPQSGD) are compositionally biased toward polar residues.

The protein belongs to the polyribonucleotide nucleotidyltransferase family. The cofactor is Mg(2+).

The protein resides in the cytoplasm. The catalysed reaction is RNA(n+1) + phosphate = RNA(n) + a ribonucleoside 5'-diphosphate. Involved in mRNA degradation. Catalyzes the phosphorolysis of single-stranded polyribonucleotides processively in the 3'- to 5'-direction. This chain is Polyribonucleotide nucleotidyltransferase, found in Anaplasma marginale (strain St. Maries).